The primary structure comprises 504 residues: Serine O-succinyltransferase (504 aa).

Residues 1-26 (MLRASSKRLQLSWQVFRRFQSSNPQL) constitute a mitochondrion transit peptide. Residues 49–70 (QACPNSVDPSASITSPSLSSGP) form a disordered region. The span at 57 to 70 (PSASITSPSLSSGP) shows a compositional bias: low complexity. The AB hydrolase-1 domain maps to 117–395 (NAILLHTGLS…SAEEIIKLNE (279 aa)). Residues 124 to 127 (GLSA) are important for substrate specificity. The Nucleophile role is filled by serine 221. Arginine 290 serves as a coordination point for substrate. Residues aspartate 443 and histidine 480 contribute to the active site. Position 481 (aspartate 481) interacts with substrate.

Belongs to the AB hydrolase superfamily. MetX family.

It is found in the mitochondrion. It catalyses the reaction succinyl-CoA + L-serine = O-succinyl-L-serine + CoA. It functions in the pathway amino-acid biosynthesis; L-cysteine biosynthesis; L-cysteine from L-serine: step 1/2. Its function is as follows. Transfers a succinyl group from succinyl-CoA to L-serine, forming succinyl-L-serine. Also has weak serine acetyl transferase activity and homoserine succinyl transferase activity. The protein is Serine O-succinyltransferase of Schizosaccharomyces pombe (strain 972 / ATCC 24843) (Fission yeast).